The chain runs to 121 residues: Large ribosomal subunit protein uL18 (121 aa).

It belongs to the universal ribosomal protein uL18 family. Part of the 50S ribosomal subunit; part of the 5S rRNA/L5/L18/L25 subcomplex. Contacts the 5S and 23S rRNAs.

Functionally, this is one of the proteins that bind and probably mediate the attachment of the 5S RNA into the large ribosomal subunit, where it forms part of the central protuberance. The sequence is that of Large ribosomal subunit protein uL18 from Mesomycoplasma hyopneumoniae (strain J / ATCC 25934 / NCTC 10110) (Mycoplasma hyopneumoniae).